Here is a 264-residue protein sequence, read N- to C-terminus: Triosephosphate isomerase (264 aa).

12-14 is a binding site for substrate; that stretch reads NWK. The Electrophile role is filled by His-104. The active-site Proton acceptor is Glu-176. Substrate contacts are provided by residues Gly-182, Ser-222, and 243-244; that span reads GG.

Belongs to the triosephosphate isomerase family. In terms of assembly, homodimer.

It is found in the cytoplasm. It carries out the reaction D-glyceraldehyde 3-phosphate = dihydroxyacetone phosphate. The protein operates within carbohydrate biosynthesis; gluconeogenesis. It functions in the pathway carbohydrate degradation; glycolysis; D-glyceraldehyde 3-phosphate from glycerone phosphate: step 1/1. Involved in the gluconeogenesis. Catalyzes stereospecifically the conversion of dihydroxyacetone phosphate (DHAP) to D-glyceraldehyde-3-phosphate (G3P). This is Triosephosphate isomerase from Bifidobacterium adolescentis (strain ATCC 15703 / DSM 20083 / NCTC 11814 / E194a).